The chain runs to 285 residues: Bifunctional protein FolD (285 aa).

NADP(+)-binding positions include 166–168 (GRS), S191, and T232.

This sequence belongs to the tetrahydrofolate dehydrogenase/cyclohydrolase family. As to quaternary structure, homodimer.

It catalyses the reaction (6R)-5,10-methylene-5,6,7,8-tetrahydrofolate + NADP(+) = (6R)-5,10-methenyltetrahydrofolate + NADPH. The enzyme catalyses (6R)-5,10-methenyltetrahydrofolate + H2O = (6R)-10-formyltetrahydrofolate + H(+). It participates in one-carbon metabolism; tetrahydrofolate interconversion. In terms of biological role, catalyzes the oxidation of 5,10-methylenetetrahydrofolate to 5,10-methenyltetrahydrofolate and then the hydrolysis of 5,10-methenyltetrahydrofolate to 10-formyltetrahydrofolate. The sequence is that of Bifunctional protein FolD from Chloroflexus aggregans (strain MD-66 / DSM 9485).